The primary structure comprises 286 residues: Protease HtpX homolog (286 aa).

2 consecutive transmembrane segments (helical) span residues 7–27 (TFML…MIGG) and 29–49 (SGMM…YWFS). H131 serves as a coordination point for Zn(2+). Residue E132 is part of the active site. H135 lines the Zn(2+) pocket. 2 helical membrane passes run 146–166 (ISAT…FFGG) and 177–197 (IAGI…QMAI). E202 is a binding site for Zn(2+).

This sequence belongs to the peptidase M48B family. Zn(2+) serves as cofactor.

Its subcellular location is the cell inner membrane. In Ralstonia pickettii (strain 12J), this protein is Protease HtpX homolog.